Consider the following 347-residue polypeptide: Acetylglutamate kinase, chloroplastic (347 aa).

Residues 1 to 50 (MATVTSNASPKSFSFTVSNPFKTLIPNKSPSLCYPTRNKNHHRLGFSIKA) constitute a chloroplast transit peptide. Thr-51 is modified (N-acetylthreonine). Residue 94 to 95 (GA) coordinates ATP. N-acetyl-L-glutamate-binding positions include Gly-126, Arg-148, and 242 to 245 (NINA). L-arginine is bound at residue Lys-260. ATP contacts are provided by residues 265–266 (TD) and Leu-271. Lys-282 lines the L-arginine pocket. ATP is bound at residue 297 to 305 (KVAGGMIPK). Residues 334–337 (EIMS) and Gly-342 each bind L-arginine.

The protein belongs to the acetylglutamate kinase family. ArgB subfamily. Interacts with GLB1. Interaction is dependent of MgATP and inhibited by 2-oxoglutarate, arginine, glutamate, citrate, and oxaloacetate.

The protein resides in the plastid. Its subcellular location is the chloroplast stroma. It catalyses the reaction N-acetyl-L-glutamate + ATP = N-acetyl-L-glutamyl 5-phosphate + ADP. Its pathway is amino-acid biosynthesis; L-arginine biosynthesis; N(2)-acetyl-L-ornithine from L-glutamate: step 2/4. With respect to regulation, inhibited by arginine. Inhibition is relieved by binding to GLB1. In terms of biological role, involved in the arginine biosynthetic pathway via the intermediate compound ornithine. In Arabidopsis thaliana (Mouse-ear cress), this protein is Acetylglutamate kinase, chloroplastic.